Reading from the N-terminus, the 149-residue chain is D-aminoacyl-tRNA deacylase (149 aa).

The Gly-cisPro motif, important for rejection of L-amino acids signature appears at 137–138; that stretch reads GP.

The protein belongs to the DTD family. As to quaternary structure, homodimer.

The protein localises to the cytoplasm. The enzyme catalyses glycyl-tRNA(Ala) + H2O = tRNA(Ala) + glycine + H(+). It catalyses the reaction a D-aminoacyl-tRNA + H2O = a tRNA + a D-alpha-amino acid + H(+). Functionally, an aminoacyl-tRNA editing enzyme that deacylates mischarged D-aminoacyl-tRNAs. Also deacylates mischarged glycyl-tRNA(Ala), protecting cells against glycine mischarging by AlaRS. Acts via tRNA-based rather than protein-based catalysis; rejects L-amino acids rather than detecting D-amino acids in the active site. By recycling D-aminoacyl-tRNA to D-amino acids and free tRNA molecules, this enzyme counteracts the toxicity associated with the formation of D-aminoacyl-tRNA entities in vivo and helps enforce protein L-homochirality. The polypeptide is D-aminoacyl-tRNA deacylase (Caldicellulosiruptor saccharolyticus (strain ATCC 43494 / DSM 8903 / Tp8T 6331)).